Here is a 271-residue protein sequence, read N- to C-terminus: Small ribosomal subunit protein uS2 (271 aa).

Belongs to the universal ribosomal protein uS2 family.

This chain is Small ribosomal subunit protein uS2, found in Wolbachia pipientis subsp. Culex pipiens (strain wPip).